Consider the following 710-residue polypeptide: Early transcription factor 82 kDa subunit (710 aa).

The protein belongs to the poxviridae VETF large subunit family. As to quaternary structure, heterodimer of a 70 kDa and a 82 kDa subunit. Part of the early transcription complex composed of ETF, RAP94/OPG109, and the DNA-directed RNA polymerase.

The protein localises to the virion. In terms of biological role, acts with RNA polymerase to initiate transcription from early gene promoters. Is recruited by the RPO-associated protein of 94 kDa RAP94/OPG109 to form the early transcription complex, which also contains the core RNA polymerase. ETF heterodimer binds to early gene promoters. The sequence is that of Early transcription factor 82 kDa subunit (OPG133) from Variola virus (isolate Human/India/Ind3/1967) (VARV).